We begin with the raw amino-acid sequence, 560 residues long: Formate--tetrahydrofolate ligase (560 aa).

Residue 69 to 76 (TPAGEGKS) coordinates ATP.

The protein belongs to the formate--tetrahydrofolate ligase family.

It carries out the reaction (6S)-5,6,7,8-tetrahydrofolate + formate + ATP = (6R)-10-formyltetrahydrofolate + ADP + phosphate. Its pathway is one-carbon metabolism; tetrahydrofolate interconversion. This Listeria monocytogenes serotype 4b (strain CLIP80459) protein is Formate--tetrahydrofolate ligase.